Consider the following 633-residue polypeptide: GTPase-activating protein GYP3 (633 aa).

Residues 26-127 (AFTVKSPSVP…HSDDLDLVPD (102 aa)) are disordered. Over residues 37–47 (FHDKMHSDHSS) the composition is skewed to basic and acidic residues. Residues 99-115 (GEDDDDNNGDNGNEDLE) show a composition bias toward acidic residues. Residue S147 is modified to Phosphoserine. Residues 223 to 456 (GIPAEWRGNA…RIWDCLFYEE (234 aa)) enclose the Rab-GAP TBC domain. At S484 the chain carries Phosphoserine.

The protein resides in the cytoplasm. Its subcellular location is the bud. The protein localises to the bud neck. In terms of biological role, regulates exocytosis by functioning as a GAP for SEC4. Stimulates specifically the GTPase activity of YPT6. Also required for efficient polarization of the actin patches. The polypeptide is GTPase-activating protein GYP3 (MSB3) (Saccharomyces cerevisiae (strain ATCC 204508 / S288c) (Baker's yeast)).